The chain runs to 375 residues: Platelet-derived growth factor receptor-like protein (375 aa).

Residues 1 to 21 (MKVWLLLGLLLVHEALEDVTG) form the signal peptide. A disordered region spans residues 22–64 (QHLPKNKRPKEPGENRIKPTNKKVKPKIPKMKDRDSANSAPKT). Residues 40–50 (PTNKKVKPKIP) are compositionally biased toward basic residues. The 98-residue stretch at 62 to 159 (PKTQSIMMQV…GYICRKDEAK (98 aa)) folds into the Ig-like C2-type 1 domain. C96 and C143 are disulfide-bonded. Residues N132 and N219 are each glycosylated (N-linked (GlcNAc...) asparagine). Residues 272–375 (PSTTILASSN…TTVATTVEFS (104 aa)) enclose the Ig-like C2-type 2 domain. C293 and C357 are oxidised to a cystine.

Forms a complex composed of PDGFRL, TNK2 and GRB2. As to expression, expressed in colon, lung and liver.

It localises to the secreted. This chain is Platelet-derived growth factor receptor-like protein (PDGFRL), found in Homo sapiens (Human).